Consider the following 131-residue polypeptide: C-type natriuretic peptide (131 aa).

A signal peptide spans 1–20; sequence MMCKALVFAVLLLAVPLERA. Residues 21 to 109 constitute a propeptide that is removed on maturation; it reads DSRALRTPVD…KRALPDRAKR (89 aa). A disulfide bond links Cys-115 and Cys-131.

This sequence belongs to the natriuretic peptide family. As to expression, highly expressed in brain and liver, and moderately in gut, gills and heart. Expressed to a low level in atrium, ventricle and liver of fresh water eels.

The protein resides in the secreted. Functionally, hormone which plays a role in endochondral ossification through regulation of cartilaginous growth plate chondrocytes proliferation and differentiation. May also be vasoactive and natriuretic. May be important for freshwater adaptation. This chain is C-type natriuretic peptide (cnp), found in Anguilla japonica (Japanese eel).